The chain runs to 47 residues: MKLTYVLIVAMLVLVVCRADCFGRGGLCTWFDPSVCCSGICTFVDCW.

An N-terminal signal peptide occupies residues 1–19; the sequence is MKLTYVLIVAMLVLVVCRA.

Belongs to the conotoxin O1 superfamily. In terms of processing, may contain 3 disulfide bonds. Expressed by the venom duct.

The protein localises to the secreted. In terms of biological role, probable neurotoxin. In Californiconus californicus (California cone), this protein is Conotoxin Cal6.18.